The following is a 435-amino-acid chain: ATP-dependent RNA helicase RhlB (435 aa).

The short motif at 9–37 (QKFADLGLNPQVVEGLEKKGFEFCTPIQA) is the Q motif element. The Helicase ATP-binding domain occupies 40 to 219 (LPVLLSGQDI…FEHMHNPEHV (180 aa)). Residue 53–60 (AQTGTGKT) coordinates ATP. The DEAD box motif lies at 165-168 (DEAD). A Helicase C-terminal domain is found at 245–390 (ALLQTLIEEE…VSDYDSSALI (146 aa)). The tract at residues 395 to 435 (APVRTPSARNQQRRTNTGGARSGDRKSNNRRPRQPRQHKEA) is disordered. A compositionally biased stretch (polar residues) spans 401–413 (SARNQQRRTNTGG). A compositionally biased stretch (basic residues) spans 422–435 (NNRRPRQPRQHKEA).

The protein belongs to the DEAD box helicase family. RhlB subfamily. In terms of assembly, component of the RNA degradosome, which is a multiprotein complex involved in RNA processing and mRNA degradation.

Its subcellular location is the cytoplasm. The catalysed reaction is ATP + H2O = ADP + phosphate + H(+). DEAD-box RNA helicase involved in RNA degradation. Has RNA-dependent ATPase activity and unwinds double-stranded RNA. In Vibrio vulnificus (strain CMCP6), this protein is ATP-dependent RNA helicase RhlB.